A 396-amino-acid polypeptide reads, in one-letter code: LIM/homeobox protein Lhx9 (396 aa).

LIM zinc-binding domains lie at 69-130 and 131-193; these read ALCA…RFSV and QRCA…LIQG. Disordered regions lie at residues 248 to 272, 328 to 365, and 377 to 396; these read ENDA…RMRT, RQEN…TDLT, and SSLD…TNLF. Residues 267–326 constitute a DNA-binding region (homeobox); that stretch reads TKRMRTSFKHHQLRTMKSYFAINHNPDAKDLKQLAQKTGLTKRVLQVWFQNARAKFRRNV. Residues 352-365 show a composition bias toward low complexity; that stretch reads LTPPSTATTLTDLT. The segment covering 384–396 has biased composition (polar residues); it reads SGSPPQTTLTNLF.

The protein localises to the nucleus. Its function is as follows. May be involved in gonadal development. The chain is LIM/homeobox protein Lhx9 (lhx9) from Danio rerio (Zebrafish).